A 396-amino-acid polypeptide reads, in one-letter code: S-adenosylmethionine synthase (396 aa).

Histidine 16 provides a ligand contact to ATP. Aspartate 18 contacts Mg(2+). Glutamate 44 lines the K(+) pocket. 2 residues coordinate L-methionine: glutamate 57 and glutamine 100. A flexible loop region spans residues 100–110; that stretch reads QSPDIAQGVNE. ATP is bound by residues 175 to 177, 242 to 243, aspartate 251, 257 to 258, alanine 274, and lysine 278; these read DAK, RF, and RK. Aspartate 251 contacts L-methionine. Lysine 282 is an L-methionine binding site.

It belongs to the AdoMet synthase family. In terms of assembly, homotetramer; dimer of dimers. It depends on Mg(2+) as a cofactor. Requires K(+) as cofactor.

Its subcellular location is the cytoplasm. The enzyme catalyses L-methionine + ATP + H2O = S-adenosyl-L-methionine + phosphate + diphosphate. It functions in the pathway amino-acid biosynthesis; S-adenosyl-L-methionine biosynthesis; S-adenosyl-L-methionine from L-methionine: step 1/1. Its function is as follows. Catalyzes the formation of S-adenosylmethionine (AdoMet) from methionine and ATP. The overall synthetic reaction is composed of two sequential steps, AdoMet formation and the subsequent tripolyphosphate hydrolysis which occurs prior to release of AdoMet from the enzyme. In Streptococcus suis (strain 05ZYH33), this protein is S-adenosylmethionine synthase.